Consider the following 150-residue polypeptide: SsrA-binding protein (150 aa).

This sequence belongs to the SmpB family.

It localises to the cytoplasm. Its function is as follows. Required for rescue of stalled ribosomes mediated by trans-translation. Binds to transfer-messenger RNA (tmRNA), required for stable association of tmRNA with ribosomes. tmRNA and SmpB together mimic tRNA shape, replacing the anticodon stem-loop with SmpB. tmRNA is encoded by the ssrA gene; the 2 termini fold to resemble tRNA(Ala) and it encodes a 'tag peptide', a short internal open reading frame. During trans-translation Ala-aminoacylated tmRNA acts like a tRNA, entering the A-site of stalled ribosomes, displacing the stalled mRNA. The ribosome then switches to translate the ORF on the tmRNA; the nascent peptide is terminated with the 'tag peptide' encoded by the tmRNA and targeted for degradation. The ribosome is freed to recommence translation, which seems to be the essential function of trans-translation. This Flavobacterium psychrophilum (strain ATCC 49511 / DSM 21280 / CIP 103535 / JIP02/86) protein is SsrA-binding protein.